The primary structure comprises 374 residues: Anhydro-N-acetylmuramic acid kinase (374 aa).

Glycine 12–aspartate 19 provides a ligand contact to ATP.

This sequence belongs to the anhydro-N-acetylmuramic acid kinase family.

The catalysed reaction is 1,6-anhydro-N-acetyl-beta-muramate + ATP + H2O = N-acetyl-D-muramate 6-phosphate + ADP + H(+). It functions in the pathway amino-sugar metabolism; 1,6-anhydro-N-acetylmuramate degradation. The protein operates within cell wall biogenesis; peptidoglycan recycling. Catalyzes the specific phosphorylation of 1,6-anhydro-N-acetylmuramic acid (anhMurNAc) with the simultaneous cleavage of the 1,6-anhydro ring, generating MurNAc-6-P. Is required for the utilization of anhMurNAc either imported from the medium or derived from its own cell wall murein, and thus plays a role in cell wall recycling. The polypeptide is Anhydro-N-acetylmuramic acid kinase (Escherichia fergusonii (strain ATCC 35469 / DSM 13698 / CCUG 18766 / IAM 14443 / JCM 21226 / LMG 7866 / NBRC 102419 / NCTC 12128 / CDC 0568-73)).